Consider the following 595-residue polypeptide: NADH-quinone oxidoreductase subunit C/D (595 aa).

Residues 1–185 (MNKNICLSAS…NPFVLTKEKE (185 aa)) form an NADH dehydrogenase I subunit C region. The NADH dehydrogenase I subunit D stretch occupies residues 209–595 (DFMFLNFGPN…IDFVMSDVDR (387 aa)).

It in the N-terminal section; belongs to the complex I 30 kDa subunit family. This sequence in the C-terminal section; belongs to the complex I 49 kDa subunit family. NDH-1 is composed of 13 different subunits. Subunits NuoB, CD, E, F, and G constitute the peripheral sector of the complex.

It localises to the cell inner membrane. It carries out the reaction a quinone + NADH + 5 H(+)(in) = a quinol + NAD(+) + 4 H(+)(out). Its function is as follows. NDH-1 shuttles electrons from NADH, via FMN and iron-sulfur (Fe-S) centers, to quinones in the respiratory chain. The immediate electron acceptor for the enzyme in this species is believed to be ubiquinone. Couples the redox reaction to proton translocation (for every two electrons transferred, four hydrogen ions are translocated across the cytoplasmic membrane), and thus conserves the redox energy in a proton gradient. In Baumannia cicadellinicola subsp. Homalodisca coagulata, this protein is NADH-quinone oxidoreductase subunit C/D.